Reading from the N-terminus, the 229-residue chain is MYDISKWKHVFKLDPNKELSDEHLEMICESGTDAVIVGGSDGITIDNVLHMLVSIRRYAVPCVLEVSDVEAITPGFDFYYIPSVLNSRKVEWVTGVHHEALKEFGDIMDWDEIYMEGYCVLNPEAKVAQLTDAKCDLTEDDVIAYARLADKLLHLPIFYLEYSGTYGDIELVKNVKAELKQAKLYYGGGISNAEQAKEMAQYADTVVVGNIIYDDIKSALKTVKAVKGE.

Lys-12 contributes to the sn-glycerol 1-phosphate binding site. The Mg(2+) site is built by Asp-14 and Ser-40. Sn-glycerol 1-phosphate is bound by residues 159 to 164, Gly-189, and 209 to 210; these read YLEYSG and GN.

This sequence belongs to the GGGP/HepGP synthase family. Group I subfamily. Homodimer. It depends on Mg(2+) as a cofactor.

The catalysed reaction is sn-glycerol 1-phosphate + all-trans-heptaprenyl diphosphate = 3-heptaprenyl-sn-glycero-1-phosphate + diphosphate. The protein operates within membrane lipid metabolism; glycerophospholipid metabolism. Its function is as follows. Prenyltransferase that catalyzes in vivo the transfer of the heptaprenyl moiety of heptaprenyl pyrophosphate (HepPP; 35 carbon atoms) to the C3 hydroxyl of sn-glycerol-1-phosphate (G1P), producing heptaprenylglyceryl phosphate (HepGP). This reaction is an ether-bond-formation step in the biosynthesis of archaea-type G1P-based membrane lipids found in Bacillales. The polypeptide is Heptaprenylglyceryl phosphate synthase (Bacillus mycoides (strain KBAB4) (Bacillus weihenstephanensis)).